The chain runs to 396 residues: Phosphoglycerate kinase (396 aa).

Residues 21-23, R37, 60-63, R121, and R154 each bind substrate; these read DFN and HLGR. Residues K205, G296, E327, and 353–356 each bind ATP; that span reads GGDS.

Belongs to the phosphoglycerate kinase family. Monomer.

It is found in the cytoplasm. It carries out the reaction (2R)-3-phosphoglycerate + ATP = (2R)-3-phospho-glyceroyl phosphate + ADP. The protein operates within carbohydrate degradation; glycolysis; pyruvate from D-glyceraldehyde 3-phosphate: step 2/5. This is Phosphoglycerate kinase from Anaeromyxobacter sp. (strain K).